We begin with the raw amino-acid sequence, 94 residues long: Co-chaperonin GroES (94 aa).

This sequence belongs to the GroES chaperonin family. As to quaternary structure, heptamer of 7 subunits arranged in a ring. Interacts with the chaperonin GroEL.

It is found in the cytoplasm. Functionally, together with the chaperonin GroEL, plays an essential role in assisting protein folding. The GroEL-GroES system forms a nano-cage that allows encapsulation of the non-native substrate proteins and provides a physical environment optimized to promote and accelerate protein folding. GroES binds to the apical surface of the GroEL ring, thereby capping the opening of the GroEL channel. In Lactococcus lactis subsp. cremoris (strain MG1363), this protein is Co-chaperonin GroES.